An 876-amino-acid chain; its full sequence is Valine--tRNA ligase (876 aa).

The 'HIGH' region signature appears at 44–54; that stretch reads PNVTGKLHLGH. A 'KMSKS' region motif is present at residues 520 to 524; the sequence is KMSKS. K523 is a binding site for ATP. A coiled-coil region spans residues 805–876; the sequence is LEGLIDMDKE…VKARIEQLKA (72 aa).

It belongs to the class-I aminoacyl-tRNA synthetase family. ValS type 1 subfamily. Monomer.

The protein resides in the cytoplasm. It carries out the reaction tRNA(Val) + L-valine + ATP = L-valyl-tRNA(Val) + AMP + diphosphate. Catalyzes the attachment of valine to tRNA(Val). As ValRS can inadvertently accommodate and process structurally similar amino acids such as threonine, to avoid such errors, it has a 'posttransfer' editing activity that hydrolyzes mischarged Thr-tRNA(Val) in a tRNA-dependent manner. This Staphylococcus aureus (strain Mu3 / ATCC 700698) protein is Valine--tRNA ligase.